The chain runs to 80 residues: Conotoxin Pu11.1 (80 aa).

Positions 1 to 19 (MKLVLAIVLILMLLSLSTG) are cleaved as a signal peptide. Positions 20 to 42 (AEMSDNHASRSATALTDRLLGPK) are excised as a propeptide. Disulfide bonds link C46/C60, C53/C65, C59/C72, and C64/C79.

It belongs to the conotoxin I3 superfamily. In terms of tissue distribution, expressed by the venom duct.

It is found in the secreted. The chain is Conotoxin Pu11.1 from Conus pulicarius (Flea-bitten cone).